Here is a 572-residue protein sequence, read N- to C-terminus: Methionine--tRNA ligase (572 aa).

Residues 11-21 (PYVNHVPHLGT) carry the 'HIGH' region motif. Zn(2+)-binding residues include C143, C146, C156, and C159. Residues 334–338 (QFSKS) carry the 'KMSKS' region motif. K337 lines the ATP pocket.

It belongs to the class-I aminoacyl-tRNA synthetase family. MetG type 1 subfamily. Requires Zn(2+) as cofactor.

Its subcellular location is the cytoplasm. It catalyses the reaction tRNA(Met) + L-methionine + ATP = L-methionyl-tRNA(Met) + AMP + diphosphate. In terms of biological role, is required not only for elongation of protein synthesis but also for the initiation of all mRNA translation through initiator tRNA(fMet) aminoacylation. In Aeropyrum pernix (strain ATCC 700893 / DSM 11879 / JCM 9820 / NBRC 100138 / K1), this protein is Methionine--tRNA ligase (metG).